We begin with the raw amino-acid sequence, 588 residues long: Sulfite reductase [NADPH] hemoprotein beta-component (588 aa).

[4Fe-4S] cluster-binding residues include C443, C449, C488, and C492. Position 492 (C492) interacts with siroheme.

This sequence belongs to the nitrite and sulfite reductase 4Fe-4S domain family. As to quaternary structure, alpha(8)-beta(8). The alpha component is a flavoprotein, the beta component is a hemoprotein. Requires siroheme as cofactor. It depends on [4Fe-4S] cluster as a cofactor.

It carries out the reaction hydrogen sulfide + 3 NADP(+) + 3 H2O = sulfite + 3 NADPH + 4 H(+). Its pathway is sulfur metabolism; hydrogen sulfide biosynthesis; hydrogen sulfide from sulfite (NADPH route): step 1/1. In terms of biological role, component of the sulfite reductase complex that catalyzes the 6-electron reduction of sulfite to sulfide. This is one of several activities required for the biosynthesis of L-cysteine from sulfate. In Actinobacillus succinogenes (strain ATCC 55618 / DSM 22257 / CCUG 43843 / 130Z), this protein is Sulfite reductase [NADPH] hemoprotein beta-component.